A 177-amino-acid polypeptide reads, in one-letter code: ATP-dependent protease subunit HslV (177 aa).

The active site involves Thr2. 3 residues coordinate Na(+): Gly157, Cys160, and Thr163.

The protein belongs to the peptidase T1B family. HslV subfamily. A double ring-shaped homohexamer of HslV is capped on each side by a ring-shaped HslU homohexamer. The assembly of the HslU/HslV complex is dependent on binding of ATP.

The protein resides in the cytoplasm. It carries out the reaction ATP-dependent cleavage of peptide bonds with broad specificity.. With respect to regulation, allosterically activated by HslU binding. Protease subunit of a proteasome-like degradation complex believed to be a general protein degrading machinery. The protein is ATP-dependent protease subunit HslV of Aeromonas hydrophila subsp. hydrophila (strain ATCC 7966 / DSM 30187 / BCRC 13018 / CCUG 14551 / JCM 1027 / KCTC 2358 / NCIMB 9240 / NCTC 8049).